The chain runs to 1143 residues: DNA-directed RNA polymerase subunit beta (1143 aa).

Belongs to the RNA polymerase beta chain family. In plastids the minimal PEP RNA polymerase catalytic core is composed of four subunits: alpha, beta, beta', and beta''. When a (nuclear-encoded) sigma factor is associated with the core the holoenzyme is formed, which can initiate transcription.

The protein localises to the plastid. It is found in the chloroplast. The catalysed reaction is RNA(n) + a ribonucleoside 5'-triphosphate = RNA(n+1) + diphosphate. DNA-dependent RNA polymerase catalyzes the transcription of DNA into RNA using the four ribonucleoside triphosphates as substrates. This Pyropia yezoensis (Susabi-nori) protein is DNA-directed RNA polymerase subunit beta.